The sequence spans 148 residues: MKSKFEASIDNLKEIEMNAYAYELIREIVLPDMLGQDYSSMMYWAGKHLARKFPLESWEEFPAFFEEAGWGTLTNVSAKKQELEFELEGPIISNRLKHQKEPCFQLEAGFIAEQIQLMNDQIAESYEQVKKRADKVVLTVKWDMKDPV.

This is an uncharacterized protein from Bacillus subtilis (strain 168).